Here is a 201-residue protein sequence, read N- to C-terminus: Recombination protein RecR (201 aa).

The C4-type zinc-finger motif lies at 60–75; that stretch reads CKRCGSYAETEICEIC. The Toprim domain occupies 83–178; the sequence is HTFCVVEQPE…NVTRIAYGIT (96 aa).

It belongs to the RecR family.

In terms of biological role, may play a role in DNA repair. It seems to be involved in an RecBC-independent recombinational process of DNA repair. It may act with RecF and RecO. This chain is Recombination protein RecR, found in Leptospira interrogans serogroup Icterohaemorrhagiae serovar copenhageni (strain Fiocruz L1-130).